A 666-amino-acid chain; its full sequence is Calpain-10 (666 aa).

The region spanning 13-321 (LFRDAAFPAS…FDEVTIGYPV (309 aa)) is the Calpain catalytic domain. Catalysis depends on residues C73, H238, and N263. Domain III regions lie at residues 322–488 (TEAG…ISLS) and 507–648 (EWET…IHSQ).

Belongs to the peptidase C2 family.

Calcium-regulated non-lysosomal thiol-protease which catalyzes limited proteolysis of substrates involved in cytoskeletal remodeling and signal transduction. May play a role in insulin-stimulated glucose uptake. The polypeptide is Calpain-10 (Capn10) (Mus musculus (Mouse)).